The sequence spans 314 residues: Putative integrase/recombinase y4rB (314 aa).

Residues 2-79 (STFRQAVQEY…YVRVFARYRA (78 aa)) enclose the Core-binding (CB) domain. One can recognise a Tyr recombinase domain in the interval 100-304 (ARPYLYSKED…SPELMKEAMR (205 aa)). Active-site residues include Arg147, Lys172, His248, Arg251, and His282. The O-(3'-phospho-DNA)-tyrosine intermediate role is filled by Tyr291.

Belongs to the 'phage' integrase family.

In Sinorhizobium fredii (strain NBRC 101917 / NGR234), this protein is Putative integrase/recombinase y4rB.